The following is a 682-amino-acid chain: Potassium-transporting ATPase ATP-binding subunit (682 aa).

A run of 4 helical transmembrane segments spans residues 34-54, 58-78, 219-239, and 254-274; these read PVMFVVWAGSVLTTLLTLAMV, IAGSALFTGIISLWLWFTVLF, IALTILLIALTIVFLLATATL, and VLVALLVCLIPTTIGGLLSAI. D307 acts as the 4-aspartylphosphate intermediate in catalysis. Residues D344, E348, 377-384, and K395 each bind ATP; that span reads FTAQSRMS. Mg(2+) is bound by residues D518 and D522. The next 3 helical transmembrane spans lie at 588–608, 616–636, and 662–682; these read FAIIPAAFAATYPQLNALNVM, AILSAVIFNALIIIFLIPLAL, and LVVPFIGIKVIDVLLTLLGLA.

It belongs to the cation transport ATPase (P-type) (TC 3.A.3) family. Type IA subfamily. The system is composed of three essential subunits: KdpA, KdpB and KdpC.

It localises to the cell inner membrane. The enzyme catalyses K(+)(out) + ATP + H2O = K(+)(in) + ADP + phosphate + H(+). Part of the high-affinity ATP-driven potassium transport (or Kdp) system, which catalyzes the hydrolysis of ATP coupled with the electrogenic transport of potassium into the cytoplasm. This subunit is responsible for energy coupling to the transport system and for the release of the potassium ions to the cytoplasm. This chain is Potassium-transporting ATPase ATP-binding subunit, found in Salmonella enteritidis PT4 (strain P125109).